A 514-amino-acid polypeptide reads, in one-letter code: ATP synthase subunit alpha (514 aa).

An ATP-binding site is contributed by 170-177 (GDRQTGKT).

This sequence belongs to the ATPase alpha/beta chains family. In terms of assembly, F-type ATPases have 2 components, CF(1) - the catalytic core - and CF(0) - the membrane proton channel. CF(1) has five subunits: alpha(3), beta(3), gamma(1), delta(1), epsilon(1). CF(0) has three main subunits: a(1), b(2) and c(9-12). The alpha and beta chains form an alternating ring which encloses part of the gamma chain. CF(1) is attached to CF(0) by a central stalk formed by the gamma and epsilon chains, while a peripheral stalk is formed by the delta and b chains.

It localises to the cell inner membrane. The catalysed reaction is ATP + H2O + 4 H(+)(in) = ADP + phosphate + 5 H(+)(out). In terms of biological role, produces ATP from ADP in the presence of a proton gradient across the membrane. The alpha chain is a regulatory subunit. This Psychrobacter cryohalolentis (strain ATCC BAA-1226 / DSM 17306 / VKM B-2378 / K5) protein is ATP synthase subunit alpha.